Reading from the N-terminus, the 433-residue chain is Schlafen-like protein 2 (433 aa).

Positions 1–168 (MADTSPRESK…LSVNFGSQPF (168 aa)) constitute a B30.2/SPRY domain. Residues 199–400 (EHVVVKLPFA…RRMASNKCVY (202 aa)) form an SLFN-like fold region. Active-site residues include Glu211 and Glu216.

The protein belongs to the Schlafen family. In terms of assembly, component of the trimeric PUCH (precursor of 21U RNA 5'-end cleavage holoenzyme) complex; consisting of tofu-1, tofu-2 and either slfl-3 or slfl-4. Within the complex, interacts (via N-terminus) with tofu-1 (via N-terminus); the interaction stabilizes tofu-2 and may form a functional nuclease. Within the complex, interacts (via N-terminus) with slfl-3 (via N-terminus); the presence of tofu-1 is required for this interaction. The cofactor is Mg(2+). In terms of tissue distribution, expressed in the germline.

It localises to the cytoplasm. Its subcellular location is the mitochondrion. Its activity is regulated as follows. Inhibited by ethylenediaminetetraacetic acid (EDTA). Component of the trimeric PUCH (precursor of 21U RNA 5'-end cleavage holoenzyme) complex, that acts as an endoribonuclease processing the 5'-end of precursor Piwi-interacting RNAs (piRNAs). The PUCH complex consists of tofu-1, tofu-2 and either slfl-3 or slfl-4, with tofu-2 exhibiting endoribonuclease activity. PUCH-mediated processing strictly requires a 7-methyl-G cap (m7 G-cap) and an uracil at position three (U3). PUCH also exhibits a strict bias for piRNA precursors with an A or G at position 1. Mature piRNA production is enhanced by the interaction of PUCH with the PETISCO complex, which is stabilizing piRNA precursors and allows their processing by PUCH. The protein is Schlafen-like protein 2 of Caenorhabditis elegans.